Reading from the N-terminus, the 461-residue chain is D-phenylhydantoinase (461 aa).

A divalent metal cation-binding residues include His59, His61, and Lys151. Lys151 carries the post-translational modification N6-carboxylysine. Tyr156 is a binding site for substrate. Residues His182 and His239 each coordinate a divalent metal cation. Ser286 serves as a coordination point for substrate. Asp313 serves as a coordination point for a divalent metal cation. A substrate-binding site is contributed by Asn335.

It belongs to the metallo-dependent hydrolases superfamily. Hydantoinase/dihydropyrimidinase family. As to quaternary structure, homotetramer. A divalent metal cation is required as a cofactor. In terms of processing, carboxylation allows a single lysine to coordinate two divalent metal cations.

The catalysed reaction is D-5-phenylhydantoin + H2O = N-carbamoyl-D-phenylglycine + H(+). In terms of biological role, catalyzes the stereospecific hydrolysis of the cyclic amide bond of D-hydantoin derivatives with an aromatic side chains at the 5'-position. Has no activity on dihydropyrimidines. The physiological function is unknown. This Shigella boydii serotype 4 (strain Sb227) protein is D-phenylhydantoinase.